The primary structure comprises 1279 residues: ATP-dependent helicase/nuclease subunit A (1279 aa).

Residues Thr4–Arg499 form the UvrD-like helicase ATP-binding domain. Ala25–Thr32 provides a ligand contact to ATP. The region spanning Glu526–Gly853 is the UvrD-like helicase C-terminal domain.

It belongs to the helicase family. AddA subfamily. In terms of assembly, heterodimer of AddA and AddB/RexB. The cofactor is Mg(2+).

The enzyme catalyses Couples ATP hydrolysis with the unwinding of duplex DNA by translocating in the 3'-5' direction.. The catalysed reaction is ATP + H2O = ADP + phosphate + H(+). In terms of biological role, the heterodimer acts as both an ATP-dependent DNA helicase and an ATP-dependent, dual-direction single-stranded exonuclease. Recognizes the chi site generating a DNA molecule suitable for the initiation of homologous recombination. The AddA nuclease domain is required for chi fragment generation; this subunit has the helicase and 3' -&gt; 5' nuclease activities. In Clostridium botulinum (strain ATCC 19397 / Type A), this protein is ATP-dependent helicase/nuclease subunit A.